The following is an 82-amino-acid chain: Small ribosomal subunit protein bS16 (82 aa).

This sequence belongs to the bacterial ribosomal protein bS16 family.

This is Small ribosomal subunit protein bS16 from Gloeothece citriformis (strain PCC 7424) (Cyanothece sp. (strain PCC 7424)).